A 282-amino-acid chain; its full sequence is Bifunctional protein FolD (282 aa).

NADP(+) is bound by residues G165–S167, S190, and T231.

This sequence belongs to the tetrahydrofolate dehydrogenase/cyclohydrolase family. Homodimer.

It carries out the reaction (6R)-5,10-methylene-5,6,7,8-tetrahydrofolate + NADP(+) = (6R)-5,10-methenyltetrahydrofolate + NADPH. It catalyses the reaction (6R)-5,10-methenyltetrahydrofolate + H2O = (6R)-10-formyltetrahydrofolate + H(+). It participates in one-carbon metabolism; tetrahydrofolate interconversion. Functionally, catalyzes the oxidation of 5,10-methylenetetrahydrofolate to 5,10-methenyltetrahydrofolate and then the hydrolysis of 5,10-methenyltetrahydrofolate to 10-formyltetrahydrofolate. The protein is Bifunctional protein FolD of Clostridium botulinum (strain Eklund 17B / Type B).